The chain runs to 92 residues: Small ribosomal subunit protein uS19 (92 aa).

Belongs to the universal ribosomal protein uS19 family.

In terms of biological role, protein S19 forms a complex with S13 that binds strongly to the 16S ribosomal RNA. The protein is Small ribosomal subunit protein uS19 of Corynebacterium kroppenstedtii (strain DSM 44385 / JCM 11950 / CIP 105744 / CCUG 35717).